Consider the following 931-residue polypeptide: Netrin receptor UNC5C (931 aa).

An N-terminal signal peptide occupies residues Met-1 to Ala-40. At Gln-41–Tyr-380 the chain is on the extracellular side. Residues Pro-62–Tyr-159 enclose the Ig-like domain. 9 disulfide bridges follow: Cys-83-Cys-144, Cys-95-Cys-142, Cys-188-Cys-239, Cys-272-Cys-309, Cys-276-Cys-313, Cys-287-Cys-299, Cys-328-Cys-362, Cys-332-Cys-367, and Cys-340-Cys-352. An Ig-like C2-type domain is found at Arg-161 to Ile-256. Asn-236 carries N-linked (GlcNAc...) asparagine glycosylation. TSP type-1 domains are found at residues Asn-260–Pro-314 and Asp-316–Met-368. A glycan (N-linked (GlcNAc...) asparagine) is linked at Asn-361. Residues Val-381–Val-401 traverse the membrane as a helical segment. Residues Tyr-402–Tyr-931 are Cytoplasmic-facing. The tract at residues Tyr-402–Tyr-931 is required for netrin-mediated axon repulsion of neuronal growth cones. Ser-502 is subject to Phosphoserine. The 144-residue stretch at Cys-530–Ser-673 folds into the ZU5 domain. Tyr-568 carries the post-translational modification Phosphotyrosine. An interaction with DCC region spans residues Ser-694 to Lys-712. A Death domain is found at Gln-850–Gly-929.

This sequence belongs to the unc-5 family. As to quaternary structure, interacts with DCC (via cytoplasmic domain). Interacts (tyrosine phosphorylated form) with PTPN11. Interacts (via extracellular domain) with FLRT3 (via extracellular domain). Interacts (via Ig-like C2-type domain) with DSCAM (via extracellular domain). Interacts (via death domain) with DAPK1. Interacts (via cytoplasmic domain) with TUBB3; this interaction is decreased by NTN1/Netrin-1. In terms of processing, phosphorylated on different cytoplasmic tyrosine residues. Phosphorylation of Tyr-568 leads to an interaction with PTPN11 phosphatase, suggesting that its activity is regulated by phosphorylation/dephosphorylation. Tyrosine phosphorylation is netrin-dependent. Post-translationally, proteolytically cleaved by caspases during apoptosis. The cleavage does not take place when the receptor is associated with netrin ligand. Its cleavage by caspases is required to induce apoptosis. In terms of tissue distribution, expressed in cortical and cerebellar neurons, including cells of the external and internal granular layer and of the Purkinje cell layer (at protein level). Mainly expressed in regions of differentiating neurons. Highly expressed in brain and lung. Expressed in the cerebellum and the neurons of the hippocampus, with enrichment in neurons of the CA3 hippocampal pyramidal layer. Weakly expressed in testis, ovary, spleen, thymus and bladder. Expressed at very low level in kidney, intestine and salivary gland.

Its subcellular location is the cell membrane. It localises to the cell surface. It is found in the synapse. The protein localises to the synaptosome. The protein resides in the cell projection. Its subcellular location is the dendrite. It localises to the axon. It is found in the growth cone. The protein localises to the lamellipodium. The protein resides in the filopodium. In terms of biological role, receptor for netrin required for axon guidance. Mediates axon repulsion of neuronal growth cones in the developing nervous system upon ligand binding. NTN1/Netrin-1 binding might cause dissociation of UNC5C from polymerized TUBB3 in microtubules and thereby lead to increased microtubule dynamics and axon repulsion. Axon repulsion in growth cones may also be caused by its association with DCC that may trigger signaling for repulsion. Might also collaborate with DSCAM in NTN1-mediated axon repulsion independently of DCC. Also involved in corticospinal tract axon guidance independently of DCC. Involved in dorsal root ganglion axon projection towards the spinal cord. It also acts as a dependence receptor required for apoptosis induction when not associated with netrin ligand. The sequence is that of Netrin receptor UNC5C (Unc5c) from Mus musculus (Mouse).